The sequence spans 83 residues: Small ribosomal subunit protein bS16 (83 aa).

It belongs to the bacterial ribosomal protein bS16 family.

In Stutzerimonas stutzeri (strain A1501) (Pseudomonas stutzeri), this protein is Small ribosomal subunit protein bS16.